Reading from the N-terminus, the 92-residue chain is Small ribosomal subunit protein uS19 (92 aa).

The protein belongs to the universal ribosomal protein uS19 family.

Its function is as follows. Protein S19 forms a complex with S13 that binds strongly to the 16S ribosomal RNA. This Mycoplasmopsis synoviae (strain 53) (Mycoplasma synoviae) protein is Small ribosomal subunit protein uS19.